The sequence spans 366 residues: Peptide chain release factor 2 (366 aa).

Q249 bears the N5-methylglutamine mark.

It belongs to the prokaryotic/mitochondrial release factor family. Post-translationally, methylated by PrmC. Methylation increases the termination efficiency of RF2.

It localises to the cytoplasm. In terms of biological role, peptide chain release factor 2 directs the termination of translation in response to the peptide chain termination codons UGA and UAA. This Petrotoga mobilis (strain DSM 10674 / SJ95) protein is Peptide chain release factor 2.